A 441-amino-acid chain; its full sequence is Probable xylan O-acetyltransferase 10 (441 aa).

At 1–19 the chain is on the cytoplasmic side; the sequence is MMKPQHGGMAGHGGGRTRS. The chain crosses the membrane as a helical; Signal-anchor for type II membrane protein span at residues 20-40; it reads PFLTSYALTLAFITFVSVLYF. The Lumenal segment spans residues 41–441; sequence KDFSSTLHQP…ELLYSKLFFP (401 aa). The tract at residues 50–81 is disordered; sequence PFLTRPPPHRRQIARPRAPSHHHGGGSSSGGG. The segment covering 56-73 has biased composition (basic residues); sequence PPHRRQIARPRAPSHHHG. Disulfide bonds link Cys-97–Cys-148, Cys-119–Cys-184, Cys-128–Cys-422, and Cys-341–Cys-418. Residue Asn-154 is glycosylated (N-linked (GlcNAc...) asparagine). The short motif at 171 to 173 is the GDS motif element; the sequence is GDS. Ser-173 (nucleophile) is an active-site residue. Asn-212, Asn-343, and Asn-381 each carry an N-linked (GlcNAc...) asparagine glycan. Asp-417 (proton donor) is an active-site residue. The short motif at 417 to 420 is the DXXH motif element; sequence DCTH. The Proton acceptor role is filled by His-420.

Belongs to the PC-esterase family. TBL subfamily. In terms of tissue distribution, expressed in roots, leaves and stems.

It localises to the golgi apparatus membrane. In terms of biological role, probable xylan acetyltransferase required for 2-O- and 3-O-monoacetylation of xylosyl residues in xylan. Possesses extremely low activity in vitro. This chain is Probable xylan O-acetyltransferase 10, found in Oryza sativa subsp. japonica (Rice).